The following is an 872-amino-acid chain: Alanine--tRNA ligase (872 aa).

Residues H567, H571, C669, and H673 each contribute to the Zn(2+) site.

This sequence belongs to the class-II aminoacyl-tRNA synthetase family. Zn(2+) serves as cofactor.

The protein resides in the cytoplasm. It carries out the reaction tRNA(Ala) + L-alanine + ATP = L-alanyl-tRNA(Ala) + AMP + diphosphate. Catalyzes the attachment of alanine to tRNA(Ala) in a two-step reaction: alanine is first activated by ATP to form Ala-AMP and then transferred to the acceptor end of tRNA(Ala). Also edits incorrectly charged Ser-tRNA(Ala) and Gly-tRNA(Ala) via its editing domain. The polypeptide is Alanine--tRNA ligase (Streptococcus pyogenes serotype M28 (strain MGAS6180)).